A 189-amino-acid chain; its full sequence is Protein CURLY FLAG LEAF 1 (189 aa).

An EAR motif is present at residues 50–55 (TLELNS). Residues 57 to 91 (LSLPCHWEQCLDLKTGEIYYINWKNGMRVKEDPRK) form the WW domain. The tract at residues 90 to 148 (RKVMNADPDSGDSYGTVCSEEDSSYYDSEESSSESSPSSRENHKEEEEEEEEEEEEEED) is disordered. Acidic residues-rich tracts occupy residues 108–121 (SEED…EESS) and 135–148 (EEEE…EEED).

As to quaternary structure, interacts with BHLH122/CFLAP1 and BHLH80/CFLAP2. Binds to HDG1. Mostly observed in roots, flowers and siliques. Expressed in cells differentiated from epidermal cells such as trichomes, stigmatic papillar cells and guard cells, as well as in tissues undergoing abscission and dehiscence.

Its function is as follows. Negatively regulates the cuticle development by interacting with the HD-ZIP IV transcription factor HDG1. In Arabidopsis thaliana (Mouse-ear cress), this protein is Protein CURLY FLAG LEAF 1.